The following is a 533-amino-acid chain: Inositol-3-phosphate synthase (533 aa).

Threonine 48 carries the post-translational modification Phosphothreonine. 5 residues coordinate NAD(+): glycine 74, glycine 75, asparagine 76, asparagine 77, and aspartate 148. Serine 177 and serine 184 each carry phosphoserine. Positions 184, 185, 195, 196, 198, 244, 245, 246, 247, 295, 296, 320, 321, 323, 354, 355, and 356 each coordinate NAD(+). Residue serine 296 is modified to Phosphoserine. Phosphoserine is present on serine 368. Lysine 369 is a binding site for NAD(+). Residue serine 374 is modified to Phosphoserine. The NAD(+) site is built by glycine 409, aspartate 410, aspartate 438, and serine 439.

It belongs to the myo-inositol 1-phosphate synthase family. In terms of assembly, homotetramer. NAD(+) is required as a cofactor. In terms of processing, phosphorylation at Ser-184 and Ser-374 is associated with a decrease in activity. Increasingly phosphorylated in presence of valproate.

It is found in the cytoplasm. The enzyme catalyses D-glucose 6-phosphate = 1D-myo-inositol 3-phosphate. Its pathway is polyol metabolism; myo-inositol biosynthesis; myo-inositol from D-glucose 6-phosphate: step 1/2. Its activity is regulated as follows. Competitively inhibited by myo-2-inosose 1-phosphate, which is also an intermediate in the catalytic reaction. Competitively inhibited by 2-deoxy-myo-inositol 1-phosphate (dMIP), 1-deoxy-1-(phosphonomethyl)-myo-2-inosose (DPMI), dihydroxyacetone phosphate (DHAP), 6-deoxy-D-glucose 6-(E)-vinylhomophosphonate, 6-deoxy-D-glucitol 6-(E)-vinylhomophosphonate, 2,6-dideoxy-D-glucose 6-(E)-vinylhomophosphonate and 2,6-dideoxy-D-glucitol 6-(E)-vinylhomophosphonate. Inhibited by 2-deoxyglucitol 6-phosphate (dgtolP). Functionally, key enzyme in myo-inositol biosynthesis pathway that catalyzes the conversion of glucose 6-phosphate to 1-myo-inositol 1-phosphate in a NAD-dependent manner. Rate-limiting enzyme in the synthesis of all inositol-containing compounds. This Saccharomyces cerevisiae (strain ATCC 204508 / S288c) (Baker's yeast) protein is Inositol-3-phosphate synthase (INO1).